Reading from the N-terminus, the 391-residue chain is Na(+)/H(+) antiporter NhaA 1 (391 aa).

The next 11 membrane-spanning stretches (helical) occupy residues 25-45 (AGGI…NSPL), 56-76 (VWLG…IFFL), 98-118 (ALPG…YIAI), 128-148 (GWAI…SLLG), 157-177 (VFLA…IAFF), 180-200 (AGLN…LIVM), 208-228 (LLPY…SGVH), 264-284 (VAFA…LAGI), 297-317 (VALG…VLAI), 335-355 (GVAM…NLAF), and 364-384 (EVKV…IVLL).

The protein belongs to the NhaA Na(+)/H(+) (TC 2.A.33) antiporter family.

It is found in the cell inner membrane. The enzyme catalyses Na(+)(in) + 2 H(+)(out) = Na(+)(out) + 2 H(+)(in). Functionally, na(+)/H(+) antiporter that extrudes sodium in exchange for external protons. The sequence is that of Na(+)/H(+) antiporter NhaA 1 from Pseudomonas syringae pv. syringae (strain B728a).